A 303-amino-acid chain; its full sequence is Zinc transporter ZIP9-B (303 aa).

A helical transmembrane segment spans residues 7-27 (ISLLSLAMLVGCYVSGIIPLA). N29 carries an N-linked (GlcNAc...) asparagine glycan. 5 helical membrane-spanning segments follow: residues 35–55 (LKLVTVLGAGLLCGTALAVIV), 102–122 (AYIGVSLVLGFVFMLLVDQIG), 142–162 (ITTTLGLVVHAAADGVALGAA), 172–192 (LIVFVAIMLHKAPAAFGLVSF), and 206–226 (HLLVFALAAPLLSMLTYLGLS). A glycan (N-linked (GlcNAc...) asparagine) is linked at N237. 2 helical membrane passes run 240 to 260 (GVAMLFSAGTFLYVATVHVLP) and 282 to 302 (LEVCALVLGCLIPLVLSIGHQ).

This sequence belongs to the ZIP transporter (TC 2.A.5) family.

Its subcellular location is the golgi apparatus. The protein resides in the trans-Golgi network membrane. It is found in the cell membrane. It localises to the cytoplasm. The protein localises to the perinuclear region. Its subcellular location is the mitochondrion. The protein resides in the nucleus. The catalysed reaction is Zn(2+)(in) = Zn(2+)(out). Its function is as follows. Transports zinc ions across cell and organelle membranes into the cytoplasm and regulates intracellular zinc homeostasis. Participates in the zinc ions efflux out of the secretory compartments. Regulates intracellular zinc level, resulting in the enhancement of AKT1 and MAPK3/MAPK1 (Erk1/2) phosphorylation in response to the BCR activation. Also functions as a membrane androgen receptor that mediates, through a G protein, the non-classical androgen signaling pathway, characterized by the activation of MAPK3/MAPK1 (Erk1/2) and transcription factors CREB1 or ATF1. Moreover, has dual functions as a membrane-bound androgen receptor and as an androgen-dependent zinc transporter both of which are mediated through an inhibitory G protein (Gi) that mediates both MAP kinase and zinc signaling leading to the androgen-dependent apoptotic process. This Xenopus laevis (African clawed frog) protein is Zinc transporter ZIP9-B (slc39a9-b).